The primary structure comprises 381 residues: Pyrimidine monooxygenase RutA (381 aa).

Residues Ile66 to Lys67, Asn132, Glu141, Arg157 to Tyr158, and Ser207 contribute to the FMN site.

Belongs to the NtaA/SnaA/DszA monooxygenase family. RutA subfamily.

The catalysed reaction is uracil + FMNH2 + NADH + O2 = (Z)-3-ureidoacrylate + FMN + NAD(+) + H2O + H(+). It carries out the reaction thymine + FMNH2 + NADH + O2 = (Z)-2-methylureidoacrylate + FMN + NAD(+) + H2O + H(+). In terms of biological role, catalyzes the pyrimidine ring opening between N-3 and C-4 by an unusual flavin hydroperoxide-catalyzed mechanism, adding oxygen atoms in the process to yield ureidoacrylate peracid, that immediately reacts with FMN forming ureidoacrylate and FMN-N(5)-oxide. The FMN-N(5)-oxide reacts spontaneously with NADH to produce FMN. Requires the flavin reductase RutF to regenerate FMN in vivo. In Methylobacterium radiotolerans (strain ATCC 27329 / DSM 1819 / JCM 2831 / NBRC 15690 / NCIMB 10815 / 0-1), this protein is Pyrimidine monooxygenase RutA.